A 300-amino-acid polypeptide reads, in one-letter code: U6 snRNA methylphosphate capping enzyme Amus (300 aa).

The segment covering 1 to 12 (MDLENNNNTPLT) has biased composition (polar residues). 2 disordered regions span residues 1–21 (MDLENNNNTPLTGKQAEKCAK) and 34–68 (VESKRLKKEESNVEATSRPPAQSPKKRLHLNGKPM). A compositionally biased stretch (basic and acidic residues) spans 34 to 44 (VESKRLKKEES). Residues 95–300 (DIRLDVLGTQ…KRPIQIFTKS (206 aa)) enclose the Bin3-type SAM domain. S-adenosyl-L-methionine-binding residues include N119 and D140.

It belongs to the methyltransferase superfamily.

The protein localises to the nucleus. In terms of biological role, probable S-adenosyl-L-methionine-dependent methyltransferase that binds and stabilizes U6 snRNA, probably by adding a methylphosphate cap at its 5'-end. Required for U6 stability, but not stability of 7SK snRNAs, other miRNAs or tRNAs. U6 stabilization is required for efficient pre-mRNA splicing. Essential for organismal and germline development. In Drosophila melanogaster (Fruit fly), this protein is U6 snRNA methylphosphate capping enzyme Amus.